The chain runs to 360 residues: METPILIKLGNGLSIPSVQELAKLTLAEIPSRYTCTGESPLNNIGASVTDDETVPVIDLQNLLSPEPVVGKLELDKLHSACKEWGFFQLVNHGVDALLMDNIKSEIKGFFNLPMNEKTKYGQQDGDFEGFGQPYIESEDQRLDWTEVFSMLSLPLHLRKPHLFPELPLPFRETLESYLSKMKKLSTVVFEMLEKSLQLVEIKGMTDLFEDGLQTMRMNYYPPCPRPELVLGLTSHSDFSGLTILLQLNEVEGLQIRKEERWISIKPLPDAFIVNVGDILEIMTNGIYRSVEHRAVVNSTKERLSIATFHDSKLESEIGPISSLVTPETPALFKRGRYEDILKENLSRKLDGKSFLDYMRM.

A Fe2OG dioxygenase domain is found at 211–311; it reads GLQTMRMNYY…RLSIATFHDS (101 aa). Tyr220 provides a ligand contact to 2-oxoglutarate. Fe cation-binding residues include His235, Asp237, and His292. Residues Arg302 and Ser304 each coordinate 2-oxoglutarate.

It belongs to the iron/ascorbate-dependent oxidoreductase family. L-ascorbate serves as cofactor. Fe cation is required as a cofactor. As to expression, mainly expressed in stems, capsules and leaves and, to a lower extent, in roots.

It carries out the reaction codeine + 2-oxoglutarate + O2 = morphine + formaldehyde + succinate + CO2. The enzyme catalyses thebaine + 2-oxoglutarate + O2 = oripavine + formaldehyde + succinate + CO2. It catalyses the reaction (S)-scoulerine + 2-oxoglutarate + O2 = (S)-3-O-demethylscoulerine + formaldehyde + succinate + CO2. The catalysed reaction is thebaine + 2-oxoglutarate + O2 = neopinone + formaldehyde + succinate + CO2. It carries out the reaction (S)-reticuline + 2-oxoglutarate + O2 = (S)-6-O-demethylreticuline + formaldehyde + succinate + CO2. The enzyme catalyses (S)-tetrahydropalmatine + S-adenosyl-L-methionine = (S)-cis-N-methyltetrahydropalmatine + S-adenosyl-L-homocysteine. Its pathway is alkaloid biosynthesis; morphine biosynthesis. Its activity is regulated as follows. Moderate substrate inhibition. Not inhibited in vitro by acylcyclohexanediones. Its function is as follows. Non-heme dioxygenase involved in biosynthesis of morphinan-type benzylisoquinoline and opiate alkaloids natural products. Mediates the conversion of codeine to morphine. Also catalyzes, with lower efficiency, the 3-O-demethylation of thebaine to oripavine and of (S)-scoulerine to 3-O-demethylscoulerine. Supports, with a lower turnover, the conversion of codeinone to morphinone, of thebaine to neopinone, and of neopine to neomorphine. Supports dealkylation reactions such as O,O-demethylenation in the metabolism of protopine, benzo[c]phenanthridine, and rhoeadine alkaloids; cleaves a methylenedioxy bridge leaving two hydroxyl groups. Catalyzes the O,O-demethylenation of methylenedioxy bridges on protopine alkaloids such as allocryptopine, cryptopine and protopine. No activity with (S)-reticuline, salutaridine, papaverine, (S)-corytuberine, oripavine, pavine or noscapine. This Papaver somniferum (Opium poppy) protein is Codeine O-demethylase.